Reading from the N-terminus, the 371-residue chain is Cytochrome b (371 aa).

4 helical membrane passes run 25 to 45, 69 to 90, 105 to 125, and 170 to 190; these read FGSMLLTCLILQITTGFFLAI, WIMQNLHAIGASMFFICIYIHI, WLSGTTLLITLMATAFFGYVL, and FFALHFILPFAIISLSSIHII. The heme b site is built by histidine 75 and histidine 89. Residues histidine 174 and histidine 188 each contribute to the heme b site. Histidine 193 lines the a ubiquinone pocket. The next 4 membrane-spanning stretches (helical) occupy residues 218-238, 280-300, 312-332, and 339-358; these read YKDTLMTISLFILMFTILSFS, LGGTLALLMSVTILMTAPFTH, LAQMAFWTLIATFITITWTAS, and FIIISQMTSILYFLFFIMNP.

The protein belongs to the cytochrome b family. The cytochrome bc1 complex contains 3 respiratory subunits (MT-CYB, CYC1 and UQCRFS1), 2 core proteins (UQCRC1 and UQCRC2) and probably 6 low-molecular weight proteins. Requires heme b as cofactor.

Its subcellular location is the mitochondrion inner membrane. Functionally, component of the ubiquinol-cytochrome c reductase complex (complex III or cytochrome b-c1 complex) that is part of the mitochondrial respiratory chain. The b-c1 complex mediates electron transfer from ubiquinol to cytochrome c. Contributes to the generation of a proton gradient across the mitochondrial membrane that is then used for ATP synthesis. The protein is Cytochrome b (MT-CYB) of Sinomicrurus kelloggi (Kellogg's coral snake).